The chain runs to 390 residues: 8-amino-7-oxononanoate synthase (390 aa).

A substrate-binding site is contributed by R19. 106–107 (GY) is a pyridoxal 5'-phosphate binding site. H131 contacts substrate. Pyridoxal 5'-phosphate contacts are provided by S176, H204, and T233. K236 bears the N6-(pyridoxal phosphate)lysine mark. Residue T350 participates in substrate binding.

The protein belongs to the class-II pyridoxal-phosphate-dependent aminotransferase family. BioF subfamily. Homodimer. Pyridoxal 5'-phosphate is required as a cofactor.

The enzyme catalyses 6-carboxyhexanoyl-[ACP] + L-alanine + H(+) = (8S)-8-amino-7-oxononanoate + holo-[ACP] + CO2. It participates in cofactor biosynthesis; biotin biosynthesis. Functionally, catalyzes the decarboxylative condensation of pimeloyl-[acyl-carrier protein] and L-alanine to produce 8-amino-7-oxononanoate (AON), [acyl-carrier protein], and carbon dioxide. This chain is 8-amino-7-oxononanoate synthase, found in Pseudomonas putida (strain ATCC 700007 / DSM 6899 / JCM 31910 / BCRC 17059 / LMG 24140 / F1).